The primary structure comprises 493 residues: Probable malate:quinone oxidoreductase (493 aa).

This sequence belongs to the MQO family. FAD serves as cofactor.

It catalyses the reaction (S)-malate + a quinone = a quinol + oxaloacetate. Its pathway is carbohydrate metabolism; tricarboxylic acid cycle; oxaloacetate from (S)-malate (quinone route): step 1/1. The sequence is that of Probable malate:quinone oxidoreductase from Mycobacterium tuberculosis (strain ATCC 25177 / H37Ra).